Reading from the N-terminus, the 411-residue chain is Serine hydroxymethyltransferase (411 aa).

(6S)-5,6,7,8-tetrahydrofolate-binding positions include Leu-117 and 121–123 (GHL). Lys-226 is modified (N6-(pyridoxal phosphate)lysine). (6S)-5,6,7,8-tetrahydrofolate contacts are provided by residues Glu-241 and 349-351 (SPF).

Belongs to the SHMT family. Homodimer. Pyridoxal 5'-phosphate is required as a cofactor.

The protein localises to the cytoplasm. It carries out the reaction (6R)-5,10-methylene-5,6,7,8-tetrahydrofolate + glycine + H2O = (6S)-5,6,7,8-tetrahydrofolate + L-serine. It functions in the pathway one-carbon metabolism; tetrahydrofolate interconversion. The protein operates within amino-acid biosynthesis; glycine biosynthesis; glycine from L-serine: step 1/1. In terms of biological role, catalyzes the reversible interconversion of serine and glycine with tetrahydrofolate (THF) serving as the one-carbon carrier. This reaction serves as the major source of one-carbon groups required for the biosynthesis of purines, thymidylate, methionine, and other important biomolecules. Also exhibits THF-independent aldolase activity toward beta-hydroxyamino acids, producing glycine and aldehydes, via a retro-aldol mechanism. The protein is Serine hydroxymethyltransferase of Oceanobacillus iheyensis (strain DSM 14371 / CIP 107618 / JCM 11309 / KCTC 3954 / HTE831).